A 447-amino-acid polypeptide reads, in one-letter code: Glutamyl-tRNA reductase (447 aa).

Substrate-binding positions include 49-52 (TCNR), Ser109, 114-116 (EQQ), and Gln120. Cys50 functions as the Nucleophile in the catalytic mechanism. Residue 189–194 (GAGSMG) coordinates NADP(+).

It belongs to the glutamyl-tRNA reductase family. As to quaternary structure, homodimer.

The catalysed reaction is (S)-4-amino-5-oxopentanoate + tRNA(Glu) + NADP(+) = L-glutamyl-tRNA(Glu) + NADPH + H(+). Its pathway is porphyrin-containing compound metabolism; protoporphyrin-IX biosynthesis; 5-aminolevulinate from L-glutamyl-tRNA(Glu): step 1/2. Its function is as follows. Catalyzes the NADPH-dependent reduction of glutamyl-tRNA(Glu) to glutamate 1-semialdehyde (GSA). This chain is Glutamyl-tRNA reductase, found in Mycobacterium sp. (strain JLS).